The sequence spans 326 residues: Acetyl-coenzyme A carboxylase carboxyl transferase subunit beta (326 aa).

One can recognise a CoA carboxyltransferase N-terminal domain in the interval 29–298 (LWIKCEACGT…TLISDESLET (270 aa)). Positions 33, 36, 52, and 55 each coordinate Zn(2+). The C4-type zinc-finger motif lies at 33–55 (CEACGTLTYTKDLQANQMVCPEC). Positions 302–326 (CHLPFQAESHNLSTTDNKIQPTPQG) are disordered. Polar residues predominate over residues 309–326 (ESHNLSTTDNKIQPTPQG).

Belongs to the AccD/PCCB family. In terms of assembly, acetyl-CoA carboxylase is a heterohexamer composed of biotin carboxyl carrier protein (AccB), biotin carboxylase (AccC) and two subunits each of ACCase subunit alpha (AccA) and ACCase subunit beta (AccD). The cofactor is Zn(2+).

It is found in the cytoplasm. The enzyme catalyses N(6)-carboxybiotinyl-L-lysyl-[protein] + acetyl-CoA = N(6)-biotinyl-L-lysyl-[protein] + malonyl-CoA. The protein operates within lipid metabolism; malonyl-CoA biosynthesis; malonyl-CoA from acetyl-CoA: step 1/1. Its function is as follows. Component of the acetyl coenzyme A carboxylase (ACC) complex. Biotin carboxylase (BC) catalyzes the carboxylation of biotin on its carrier protein (BCCP) and then the CO(2) group is transferred by the transcarboxylase to acetyl-CoA to form malonyl-CoA. This chain is Acetyl-coenzyme A carboxylase carboxyl transferase subunit beta, found in Trichodesmium erythraeum (strain IMS101).